A 481-amino-acid chain; its full sequence is Pyruvate kinase (481 aa).

Arginine 33 contacts substrate. K(+) is bound by residues asparagine 35, serine 37, aspartate 67, and threonine 68. Residue 35–38 participates in ATP binding; the sequence is NFSH. Arginine 74 and lysine 155 together coordinate ATP. Mg(2+) is bound at residue glutamate 221. Positions 244, 245, and 277 each coordinate substrate. Position 245 (aspartate 245) interacts with Mg(2+).

This sequence belongs to the pyruvate kinase family. Homotetramer. Requires Mg(2+) as cofactor. The cofactor is K(+).

The enzyme catalyses pyruvate + ATP = phosphoenolpyruvate + ADP + H(+). Its pathway is carbohydrate degradation; glycolysis; pyruvate from D-glyceraldehyde 3-phosphate: step 5/5. The protein is Pyruvate kinase (pyk) of Chlamydia muridarum (strain MoPn / Nigg).